A 517-amino-acid chain; its full sequence is Perilipin-1 (517 aa).

Phosphoserine is present on S81. The residue at position 85 (T85) is a Phosphothreonine. Phosphoserine is present on residues S126, S130, S132, S137, and S174. The interval 195–216 (DKESAPSSGRQRTQKAPKAKPS) is disordered. Phosphothreonine is present on residues T223, T298, and T300. Positions 286-320 (LAASQDESHDDQTDTEGEETDDEEEEEESEAEENV) are disordered. The segment at 290 to 321 (QDESHDDQTDTEGEETDDEEEEEESEAEENVL) is required for interaction with CIDEC. The span at 298–318 (TDTEGEETDDEEEEEESEAEE) shows a compositional bias: acidic residues. S314, S384, S386, S410, S433, S439, S460, S492, and S494 each carry phosphoserine. The tract at residues 425–490 (SAEAERKGSG…AMPREKPARR (66 aa)) is disordered.

This sequence belongs to the perilipin family. In terms of assembly, interacts with ABHD5. Interacts with CIDEC. Interacts with AQP7. Post-translationally, major cAMP-dependent protein kinase-substrate in adipocytes, also dephosphorylated by PP1. When phosphorylated, may be maximally sensitive to HSL and when unphosphorylated, may play a role in the inhibition of lipolysis, by acting as a barrier in lipid droplet.

Its subcellular location is the endoplasmic reticulum. It is found in the lipid droplet. Functionally, modulator of adipocyte lipid metabolism. Coats lipid storage droplets to protect them from breakdown by hormone-sensitive lipase (HSL). Its absence may result in leanness. Plays a role in unilocular lipid droplet formation by activating CIDEC. Their interaction promotes lipid droplet enlargement and directional net neutral lipid transfer. May modulate lipolysis and triglyceride levels. In Mus musculus (Mouse), this protein is Perilipin-1 (Plin1).